The sequence spans 86 residues: Omega-theraphotoxin-Hhn1f 1 (86 aa).

Residues 1–21 (MKSIVFVALFGLALLAVVCSA) form the signal peptide. A propeptide spanning residues 22–50 (SEDAHKELLKEVVRAMVVDKTDAVQAEER) is cleaved from the precursor. 3 cysteine pairs are disulfide-bonded: Cys52–Cys66, Cys59–Cys71, and Cys65–Cys78.

The protein belongs to the neurotoxin 10 (Hwtx-1) family. 17 (Hntx-9) subfamily. Expressed by the venom gland.

The protein localises to the secreted. Its function is as follows. Ion channel inhibitor. The polypeptide is Omega-theraphotoxin-Hhn1f 1 (Cyriopagopus hainanus (Chinese bird spider)).